The sequence spans 236 residues: Purine nucleoside phosphorylase DeoD-type 2 (236 aa).

An a purine D-ribonucleoside-binding site is contributed by histidine 5. Phosphate-binding positions include glycine 21, arginine 25, arginine 44, and 88 to 91 (RIGS). A purine D-ribonucleoside-binding positions include 180–182 (DME) and 204–205 (SD). Aspartate 205 functions as the Proton donor in the catalytic mechanism.

This sequence belongs to the PNP/UDP phosphorylase family. As to quaternary structure, homohexamer; trimer of homodimers.

The enzyme catalyses a purine D-ribonucleoside + phosphate = a purine nucleobase + alpha-D-ribose 1-phosphate. It carries out the reaction a purine 2'-deoxy-D-ribonucleoside + phosphate = a purine nucleobase + 2-deoxy-alpha-D-ribose 1-phosphate. In terms of biological role, catalyzes the reversible phosphorolytic breakdown of the N-glycosidic bond in the beta-(deoxy)ribonucleoside molecules, with the formation of the corresponding free purine bases and pentose-1-phosphate. This Vibrio cholerae serotype O1 (strain ATCC 39315 / El Tor Inaba N16961) protein is Purine nucleoside phosphorylase DeoD-type 2.